A 154-amino-acid chain; its full sequence is RING finger protein 11 (154 aa).

Positions 1-12 are enriched in polar residues; it reads MGNCLKSPTSDD. A disordered region spans residues 1-52; that stretch reads MGNCLKSPTSDDISLLHESQSDRASFGEGTEPDQEPPPPYQEQVPVPIYHPT. Gly2 carries the N-myristoyl glycine lipid modification. Cys4 is lipidated: S-palmitoyl cysteine. Phosphoserine is present on residues Ser14 and Ser25. The PPxY motif signature appears at 37–40; the sequence is PPPY. An RING-type zinc finger spans residues 99 to 140; sequence CVICMMDFVYGDPIRFLPCMHIYHLDCIDDWLMRSFTCPSCM. Thr135 carries the phosphothreonine; by PKB/AKT1 modification.

Interacts (when phosphorylated) with 14-3-3. Interacts with the E3 ubiquitin-ligases NEDD4, ITCH, SMURF2 and WWP1. Also interacts with the E2 ubiquitin-conjugating enzymes UBE2D1 and UBE2N, but neither with CDC34, nor with UBE2L3. Interacts with ZNF350, EPS15 and STAMBP. After TNF stimulation, interacts with TAX1BP1, TNFAIP3 and RIPK1; these interactions are transient and they are lost after 1 hour of stimulation with TNF. Interacts with GGA1. In terms of processing, ubiquitinated in the presence of ITCH, SMURF2 and UBE2D1, as well as WWP1. Post-translationally, phosphorylation by PKB/AKT1 may accelerate degradation by the proteasome. Acylation at both Gly-2 and Cys-4 is required for proper localization to the endosomes.

It localises to the early endosome. Its subcellular location is the recycling endosome. It is found in the cytoplasm. The protein localises to the nucleus. In terms of biological role, essential component of a ubiquitin-editing protein complex, comprising also TNFAIP3, ITCH and TAX1BP1, that ensures the transient nature of inflammatory signaling pathways. Promotes the association of TNFAIP3 to RIPK1 after TNF stimulation. TNFAIP3 deubiquitinates 'Lys-63' polyubiquitin chains on RIPK1 and catalyzes the formation of 'Lys-48'-polyubiquitin chains. This leads to RIPK1 proteasomal degradation and consequently termination of the TNF- or LPS-mediated activation of NF-kappa-B. Recruits STAMBP to the E3 ubiquitin-ligase SMURF2 for ubiquitination, leading to its degradation by the 26S proteasome. The polypeptide is RING finger protein 11 (Rnf11) (Mus musculus (Mouse)).